The sequence spans 900 residues: 3'-5' exonuclease DinG (900 aa).

The Exonuclease domain occupies 8–161 (VVDLETTGNQ…DEDATTTALL (154 aa)). One can recognise a Helicase ATP-binding domain in the interval 241–496 (SEVVKSLNLT…KAIDKLEQQR (256 aa)). Position 276-283 (276-283 (APLGSGKS)) interacts with ATP. The short motif at 448–451 (DEAH) is the DEAH box element. One can recognise a Helicase C-terminal domain in the interval 713 to 893 (DYIQEYVTIT…QFSKLVNKIQ (181 aa)).

The protein belongs to the helicase family. DinG subfamily. Type 2 sub-subfamily.

Its function is as follows. 3'-5' exonuclease. This chain is 3'-5' exonuclease DinG, found in Staphylococcus haemolyticus (strain JCSC1435).